The sequence spans 161 residues: Nucleotide-binding protein Bmul_0741/BMULJ_02519 (161 aa).

Belongs to the YajQ family.

Functionally, nucleotide-binding protein. This is Nucleotide-binding protein Bmul_0741/BMULJ_02519 from Burkholderia multivorans (strain ATCC 17616 / 249).